The following is a 270-amino-acid chain: Lipopolysaccharide core biosynthesis glycosyltransferase LpsC (270 aa).

It belongs to the glycosyltransferase 2 family. WaaE/KdtX subfamily.

It functions in the pathway bacterial outer membrane biogenesis; LPS core biosynthesis. The protein is Lipopolysaccharide core biosynthesis glycosyltransferase LpsC (lpsC) of Rhizobium meliloti (strain 1021) (Ensifer meliloti).